The chain runs to 734 residues: MKIILTLSIFLICFLQLGQSVIDPSQNEVMSDLLFNLYGYDKSLDPCNSNSVECDDINSTSTIKTVISLNLPTPLQEYVITQDLTPLQNLTYMELYEKIYLTLSFFKNINKLTQLETIVTLSFNVTIPDDTIFPASLETFSIYKPSVPLSIAIFGSNIKNLYVNSPLTGYSIPTLINVNPYLENLQLPVTYYSGFPSNISLAFPNLQYLTIYVNNDMDQNNYHNFSISNIGVFKNLKGLDIEFTDSYNPQEFSINSFLSNVPVIDSLYIYGQGVTIDPSVGIIDLSYVKSKKFLSINIQESSLLNNCKGKSFKSPKKAYFRSNYNTFSYACIDFSNLAYFYDYYNEYEQYLPNIDNAPLLNEIYISESVVVGDIPESYCRINYLGLNYNQLNGTAPSCILCLGGNRGGDIVLPNPLLNFNKTSEPYCPTFKIDQNYTNLVATDGIGKLIITGTNLGWYGNDITPITANSKLAITIPKGVGTNKSITVTFQNGEQRTFNYSYVPPFIKSYGFLELDSNKYLTINGTGFDFENPNIITINGQQITFSIALGGGDNDGLIALPIDELPNFDSETKFTVSTLVGGQSSNEVTFYYFNSINITEEKLVLNNTGGSVDINGSFGTNNISLVSISINGTNCLVTSYTNSKLTIQYPSKQVGDNYVLTLNVGGYAVNLVVEYIEGGETPTPSTTPSTTPSTTPSTTPSSTPTQSPGDDGSTSSTLSISFYLITLLLLTQQFI.

The first 20 residues, 1-20 (MKIILTLSIFLICFLQLGQS), serve as a signal peptide directing secretion. N58, N89, N124, N198, N224, N392, N420, N435, N482, N498, N523, N596, N605, N614, N621, and N630 each carry an N-linked (GlcNAc...) asparagine glycan. In terms of domain architecture, IPT/TIG spans 504 to 592 (PFIKSYGFLE…SSNEVTFYYF (89 aa)). The disordered stretch occupies residues 678–712 (GETPTPSTTPSTTPSTTPSTTPSSTPTQSPGDDGS). Over residues 680 to 712 (TPTPSTTPSTTPSTTPSTTPSSTPTQSPGDDGS) the composition is skewed to low complexity. Tandem repeats lie at residues 683–686 (PSTT), 687–690 (PSTT), 691–694 (PSTT), and 695–698 (PSTT). The interval 683-698 (PSTTPSTTPSTTPSTT) is 4 X 4 AA tandem repeats of P-S-T-T. Residue G708 is the site of GPI-like-anchor amidated glycine attachment. The propeptide at 709 to 734 (DDGSTSSTLSISFYLITLLLLTQQFI) is removed in mature form.

The sugar chains may play important roles in cell fusion. In terms of processing, the GPI-like-anchor contains a phosphoceramide group, rather than a phosphatidyl group.

The protein localises to the cell membrane. Involved in the sexual cell fusion of D.discoideum. The sequence is that of Cell surface glycoprotein gp138B (GP138B) from Dictyostelium discoideum (Social amoeba).